The chain runs to 428 residues: Histidine--tRNA ligase (428 aa).

It belongs to the class-II aminoacyl-tRNA synthetase family. Homodimer.

It is found in the cytoplasm. The catalysed reaction is tRNA(His) + L-histidine + ATP = L-histidyl-tRNA(His) + AMP + diphosphate + H(+). In Lactobacillus delbrueckii subsp. bulgaricus (strain ATCC 11842 / DSM 20081 / BCRC 10696 / JCM 1002 / NBRC 13953 / NCIMB 11778 / NCTC 12712 / WDCM 00102 / Lb 14), this protein is Histidine--tRNA ligase.